The sequence spans 135 residues: MRASAVPEILAARLAQSDPPVSEYAVELVEGVVERRGEIDERIARYAEGWTLERMPPVDRNILRIAVLELLWRPDVPDRVAIDEAVELAKNLSTHRSPAFVNGLLASLVEGKGLATPAESTGRGSAVDSIPGQPS.

The interval 115 to 135 is disordered; sequence ATPAESTGRGSAVDSIPGQPS.

The protein belongs to the NusB family.

Functionally, involved in transcription antitermination. Required for transcription of ribosomal RNA (rRNA) genes. Binds specifically to the boxA antiterminator sequence of the ribosomal RNA (rrn) operons. This Frankia casuarinae (strain DSM 45818 / CECT 9043 / HFP020203 / CcI3) protein is Transcription antitermination protein NusB.